A 592-amino-acid polypeptide reads, in one-letter code: Aspartate--tRNA(Asp/Asn) ligase (592 aa).

Glutamate 173 provides a ligand contact to L-aspartate. An aspartate region spans residues 197 to 200 (QLFK). Arginine 219 is a binding site for L-aspartate. ATP is bound by residues 219–221 (RDE) and glutamine 228. Residue histidine 448 participates in L-aspartate binding. Residue glutamate 481 participates in ATP binding. Arginine 488 lines the L-aspartate pocket. 533–536 (GLDR) lines the ATP pocket.

It belongs to the class-II aminoacyl-tRNA synthetase family. Type 1 subfamily. Homodimer.

It is found in the cytoplasm. The catalysed reaction is tRNA(Asx) + L-aspartate + ATP = L-aspartyl-tRNA(Asx) + AMP + diphosphate. In terms of biological role, aspartyl-tRNA synthetase with relaxed tRNA specificity since it is able to aspartylate not only its cognate tRNA(Asp) but also tRNA(Asn). Reaction proceeds in two steps: L-aspartate is first activated by ATP to form Asp-AMP and then transferred to the acceptor end of tRNA(Asp/Asn). This chain is Aspartate--tRNA(Asp/Asn) ligase, found in Chromohalobacter salexigens (strain ATCC BAA-138 / DSM 3043 / CIP 106854 / NCIMB 13768 / 1H11).